The following is a 162-amino-acid chain: Large ribosomal subunit protein bL17 (162 aa).

The disordered stretch occupies residues 126-162 (KKEEVKTKSRRGGKAKKAEPTTEAPANTTEETTDSAE). Over residues 146-155 (TTEAPANTTE) the composition is skewed to low complexity.

It belongs to the bacterial ribosomal protein bL17 family. As to quaternary structure, part of the 50S ribosomal subunit. Contacts protein L32.

The sequence is that of Large ribosomal subunit protein bL17 from Flavobacterium psychrophilum (strain ATCC 49511 / DSM 21280 / CIP 103535 / JIP02/86).